The chain runs to 241 residues: Uridylate kinase (241 aa).

12 to 15 (KLSG) is a binding site for ATP. The tract at residues 20–25 (GDKGQG) is involved in allosteric activation by GTP. Position 54 (Gly-54) interacts with UMP. ATP-binding residues include Gly-55 and Arg-59. Residues Asp-74 and 135–142 (TGSPYFST) contribute to the UMP site. Residues Asn-163, Tyr-169, and Asp-172 each coordinate ATP.

It belongs to the UMP kinase family. In terms of assembly, homohexamer.

Its subcellular location is the cytoplasm. It carries out the reaction UMP + ATP = UDP + ADP. The protein operates within pyrimidine metabolism; CTP biosynthesis via de novo pathway; UDP from UMP (UMPK route): step 1/1. With respect to regulation, allosterically activated by GTP. Inhibited by UTP. In terms of biological role, catalyzes the reversible phosphorylation of UMP to UDP. The polypeptide is Uridylate kinase (Leuconostoc mesenteroides subsp. mesenteroides (strain ATCC 8293 / DSM 20343 / BCRC 11652 / CCM 1803 / JCM 6124 / NCDO 523 / NBRC 100496 / NCIMB 8023 / NCTC 12954 / NRRL B-1118 / 37Y)).